We begin with the raw amino-acid sequence, 354 residues long: Glycine betaine/proline betaine transport system permease protein ProW (354 aa).

A disordered region spans residues 1–41; it reads MADQNNPWDTTPAADSAAQSADAWGTPTTAPTDGGGADWLT. The Cytoplasmic portion of the chain corresponds to 1–99; that stretch reads MADQNNPWDT…VDYILNGFQQ (99 aa). Low complexity predominate over residues 13 to 32; that stretch reads AADSAAQSADAWGTPTTAPT. A helical membrane pass occupies residues 100-120; sequence LLLGMPAPVAIIVFALIAWQI. Position 121 (S121) is a topological domain, periplasmic. Residues 122–142 traverse the membrane as a helical segment; that stretch reads GVGMGVATLVSLIAIGAIGAW. At 143 to 148 the chain is on the cytoplasmic side; that stretch reads SQAMVT. One can recognise an ABC transmembrane type-1 domain in the interval 145 to 324; the sequence is AMVTLALVLT…ILAIILDRLT (180 aa). A helical transmembrane segment spans residues 149-169; that stretch reads LALVLTALLFCIVIGLPLGIW. Residues 170 to 198 lie on the Periplasmic side of the membrane; that stretch reads LARSPRAAKIIRPLLDAMQTTPAFVYLVP. Residues 199-219 form a helical membrane-spanning segment; the sequence is IVMLFGIGNVPGVVVTIIFAL. Residues 220–270 are Cytoplasmic-facing; that stretch reads PPIIRLTILGINQVPADLIEASRSFGASPRQMLFKVQLPLAMPTIMAGVNQ. The helical transmembrane segment at 271-291 threads the bilayer; the sequence is TLMLALSMVVIASMIAVGGLG. Residues 292 to 300 lie on the Periplasmic side of the membrane; that stretch reads QMVLRGIGR. Residues 301–321 traverse the membrane as a helical segment; sequence LDMGLATVGGVGIVILAIILD. Topologically, residues 322 to 354 are cytoplasmic; sequence RLTQAVGRDSRSRGNRRWYTTGPVGLLTRPFIK.

This sequence belongs to the binding-protein-dependent transport system permease family. CysTW subfamily. In terms of assembly, the complex is composed of two ATP-binding proteins (ProV), two transmembrane proteins (ProW) and a solute-binding protein (ProX).

It is found in the cell inner membrane. Its function is as follows. Part of the ProU ABC transporter complex involved in glycine betaine and proline betaine uptake. Probably responsible for the translocation of the substrate across the membrane. The sequence is that of Glycine betaine/proline betaine transport system permease protein ProW from Escherichia coli (strain K12).